Here is a 237-residue protein sequence, read N- to C-terminus: MNIFDRKINFDALLKFSHITPSTQQHLKKVYASFALCMFVAAAGAYVHVVTRFIQAGLLSALGSLGLMIWLMATPHSHETEQKRLGLLAGFAFLTGVGLGPALDLCIAINPSILPTAFMGTAMIFTCFTLSALYARRRSYLFLGGILMSAMSLMVLSSLGNLFFGSIWLFQANLYVGLVVMCGFVLFDTQLIIEKAENGDKDYIWHCVDLFSDFVTLFRKLMMILAMNEKDKKKEKK.

The Cytoplasmic portion of the chain corresponds to 1–29 (MNIFDRKINFDALLKFSHITPSTQQHLKK). Lysine 7 participates in a covalent cross-link: Glycyl lysine isopeptide (Lys-Gly) (interchain with G-Cter in ubiquitin). A helical membrane pass occupies residues 30-50 (VYASFALCMFVAAAGAYVHVV). Topologically, residues 51 to 52 (TR) are lumenal. A helical membrane pass occupies residues 53-73 (FIQAGLLSALGSLGLMIWLMA). At 74-86 (TPHSHETEQKRLG) the chain is on the cytoplasmic side. Residues 87–107 (LLAGFAFLTGVGLGPALDLCI) form a helical membrane-spanning segment. The Lumenal segment spans residues 108 to 112 (AINPS). Residues 113–133 (ILPTAFMGTAMIFTCFTLSAL) traverse the membrane as a helical segment. Residues 134–139 (YARRRS) are Cytoplasmic-facing. The helical transmembrane segment at 140–160 (YLFLGGILMSAMSLMVLSSLG) threads the bilayer. Topologically, residues 161–166 (NLFFGS) are lumenal. A helical transmembrane segment spans residues 167-187 (IWLFQANLYVGLVVMCGFVLF). Residues 188-206 (DTQLIIEKAENGDKDYIWH) lie on the Cytoplasmic side of the membrane. An intramembrane region (helical) is located at residues 207–227 (CVDLFSDFVTLFRKLMMILAM). Topologically, residues 228–237 (NEKDKKKEKK) are cytoplasmic.

It belongs to the BI1 family. As to quaternary structure, interacts with BCL2 and BCL2L1. Interacts with ERN1. Post-translationally, ubiquitinated by BFAR, leading to proteasomal degradation.

The protein localises to the endoplasmic reticulum membrane. Endoplasmic reticulum (ER)-resident protein that confers cellular protection as an anti-apoptotic protein by limiting multiple stress-inducing pathways surrounding the endoplasmic reticulum and mitochondria. Inhibits the activities of the key sensor for the endoplasmic reticulum unfolded protein response IRE1alpha/ERN1 both directly and by blocking BAX/BAK binding. Modulates ER calcium homeostasis by acting as a calcium-leak channel. Negatively regulates autophagy and autophagosome formation, especially during periods of nutrient deprivation, and reduces cell survival during starvation. This Sus scrofa (Pig) protein is Bax inhibitor 1 (TMBIM6).